We begin with the raw amino-acid sequence, 222 residues long: Charged multivesicular body protein 3 (222 aa).

Residue Gly2 is the site of N-myristoyl glycine attachment. An intramolecular interaction with C-terminus region spans residues 2–113 (GLFGKTQEKP…LQKSTEVMKA (112 aa)). Residues 22–54 (KIRKEMRVVDRQIRDIQREEEKVKRSVKDAAKK) are a coiled coil. Important for autoinhibitory function stretches follow at residues 59–64 (VCIVLA) and 168–169 (IL). Residues 141–222 (EEMLEDTFES…MQSRLATLRS (82 aa)) adopt a coiled-coil conformation. The segment at 151–220 (MDDQEEMEEE…EAMQSRLATL (70 aa)) is intramolecular interaction with N-terminus. The segment at 151-222 (MDDQEEMEEE…MQSRLATLRS (72 aa)) is interaction with VPS4A. Lys179 participates in a covalent cross-link: Glycyl lysine isopeptide (Lys-Gly) (interchain with G-Cter in ubiquitin). The disordered stretch occupies residues 180 to 222 (APSKVTDALPEPEPPGAMAASEDEEEEEEALEAMQSRLATLRS). Position 200 is a phosphoserine (Ser200). Over residues 200 to 210 (SEDEEEEEEAL) the composition is skewed to acidic residues. An MIT-interacting motif motif is present at residues 201-211 (EDEEEEEEALE). Interaction with STAMBP regions lie at residues 203 to 207 (EEEEE) and 221 to 222 (RS).

It belongs to the SNF7 family. As to quaternary structure, probable core component of the endosomal sorting required for transport complex III (ESCRT-III). ESCRT-III components are thought to multimerize to form a flat lattice on the perimeter membrane of the endosome. Several assembly forms of ESCRT-III may exist that interact and act sequentially. Forms a metastable monomer in solution; its core structure (without part of the putative autoinhibitory C-terminal acidic region) oligomerizes into a flat lattice via two different dimerization interfaces. In vitro, heteromerizes with CHMP2A (but not CHMP4) to form helical tubular structures that expose membrane-interacting sites on the outside whereas VPS4B can associate on the inside of the tubule. May interact with IGFBP7; the relevance of such interaction however remains unclear. Interacts with CHMP2A. Interacts with CHMP4A; the interaction requires the release of CHMP4A autoinhibition. Interacts with VPS4A. Interacts with STAMBP; the interaction appears to relieve the autoinhibition of CHMP3. Interacts with VTA1. As to expression, widely expressed. Expressed in heart, brain, placenta, lung, liver, skeletal muscle, kidney and pancreas.

The protein resides in the cytoplasm. Its subcellular location is the cytosol. The protein localises to the membrane. It is found in the endosome. It localises to the late endosome membrane. Its function is as follows. Probable core component of the endosomal sorting required for transport complex III (ESCRT-III) which is involved in multivesicular bodies (MVBs) formation and sorting of endosomal cargo proteins into MVBs. MVBs contain intraluminal vesicles (ILVs) that are generated by invagination and scission from the limiting membrane of the endosome and mostly are delivered to lysosomes enabling degradation of membrane proteins, such as stimulated growth factor receptors, lysosomal enzymes and lipids. The MVB pathway appears to require the sequential function of ESCRT-O, -I,-II and -III complexes. ESCRT-III proteins mostly dissociate from the invaginating membrane before the ILV is released. The ESCRT machinery also functions in topologically equivalent membrane fission events, such as the terminal stages of cytokinesis and the budding of enveloped viruses (HIV-1 and other lentiviruses). ESCRT-III proteins are believed to mediate the necessary vesicle extrusion and/or membrane fission activities, possibly in conjunction with the AAA ATPase VPS4. Selectively binds to phosphatidylinositol 3,5-bisphosphate PtdIns(3,5)P2 and PtdIns(3,4)P2 in preference to other phosphoinositides tested. Involved in late stages of cytokinesis. Plays a role in endosomal sorting/trafficking of EGF receptor. Isoform 2 prevents stress-mediated cell death and accumulation of reactive oxygen species when expressed in yeast cells. The sequence is that of Charged multivesicular body protein 3 (CHMP3) from Homo sapiens (Human).